The primary structure comprises 794 residues: DNA ligase (794 aa).

Residues D35 to D39, S84 to L85, and E126 contribute to the NAD(+) site. K128 serves as the catalytic N6-AMP-lysine intermediate. NAD(+) contacts are provided by R149, E186, K302, and K326. Residues C420, C423, C450, and C456 each coordinate Zn(2+). Residues V711–R794 enclose the BRCT domain.

This sequence belongs to the NAD-dependent DNA ligase family. LigA subfamily. Mg(2+) is required as a cofactor. Mn(2+) serves as cofactor.

It catalyses the reaction NAD(+) + (deoxyribonucleotide)n-3'-hydroxyl + 5'-phospho-(deoxyribonucleotide)m = (deoxyribonucleotide)n+m + AMP + beta-nicotinamide D-nucleotide.. Its function is as follows. DNA ligase that catalyzes the formation of phosphodiester linkages between 5'-phosphoryl and 3'-hydroxyl groups in double-stranded DNA using NAD as a coenzyme and as the energy source for the reaction. It is essential for DNA replication and repair of damaged DNA. The sequence is that of DNA ligase from Pseudomonas aeruginosa (strain UCBPP-PA14).